The sequence spans 101 residues: Putative pterin-4-alpha-carbinolamine dehydratase (101 aa).

The protein belongs to the pterin-4-alpha-carbinolamine dehydratase family.

The enzyme catalyses (4aS,6R)-4a-hydroxy-L-erythro-5,6,7,8-tetrahydrobiopterin = (6R)-L-erythro-6,7-dihydrobiopterin + H2O. The polypeptide is Putative pterin-4-alpha-carbinolamine dehydratase (Ralstonia pickettii (strain 12J)).